A 72-amino-acid chain; its full sequence is Translation initiation factor IF-1 (72 aa).

The 72-residue stretch at 1–72 folds into the S1-like domain; the sequence is MAKQSAIEQD…SKGRIVFRYK (72 aa).

The protein belongs to the IF-1 family. In terms of assembly, component of the 30S ribosomal translation pre-initiation complex which assembles on the 30S ribosome in the order IF-2 and IF-3, IF-1 and N-formylmethionyl-tRNA(fMet); mRNA recruitment can occur at any time during PIC assembly.

It localises to the cytoplasm. In terms of biological role, one of the essential components for the initiation of protein synthesis. Stabilizes the binding of IF-2 and IF-3 on the 30S subunit to which N-formylmethionyl-tRNA(fMet) subsequently binds. Helps modulate mRNA selection, yielding the 30S pre-initiation complex (PIC). Upon addition of the 50S ribosomal subunit IF-1, IF-2 and IF-3 are released leaving the mature 70S translation initiation complex. This is Translation initiation factor IF-1 from Bacteroides fragilis (strain ATCC 25285 / DSM 2151 / CCUG 4856 / JCM 11019 / LMG 10263 / NCTC 9343 / Onslow / VPI 2553 / EN-2).